A 231-amino-acid polypeptide reads, in one-letter code: Orotidine 5'-phosphate decarboxylase (231 aa).

Substrate-binding positions include aspartate 11, lysine 34, 61–70 (DLKLHDIPNT), threonine 117, arginine 179, glutamine 188, glycine 208, and arginine 209. Lysine 63 functions as the Proton donor in the catalytic mechanism.

This sequence belongs to the OMP decarboxylase family. Type 1 subfamily. In terms of assembly, homodimer.

The catalysed reaction is orotidine 5'-phosphate + H(+) = UMP + CO2. The protein operates within pyrimidine metabolism; UMP biosynthesis via de novo pathway; UMP from orotate: step 2/2. In terms of biological role, catalyzes the decarboxylation of orotidine 5'-monophosphate (OMP) to uridine 5'-monophosphate (UMP). In Streptococcus suis (strain 98HAH33), this protein is Orotidine 5'-phosphate decarboxylase.